Here is an 813-residue protein sequence, read N- to C-terminus: Protein PPP4R3C1 (813 aa).

Positions 730–813 (NESESAIEGQ…PPPKRPNLST (84 aa)) are disordered. A compositionally biased stretch (acidic residues) spans 777–788 (YDTDDENDDDPY).

The protein belongs to the SMEK family.

This is Protein PPP4R3C1 from Mus musculus (Mouse).